The chain runs to 74 residues: Protein F9 homolog (74 aa).

Residues 1–34 (GHAAANCALARVATALTRRVPASRHGLAEGGTPP) are Virion surface-facing. The chain crosses the membrane as a helical span at residues 35-55 (WTLLLAVAAVAVLGVVAISLL). Over 56 to 73 (RRALRIRFRYSKSIQTLR) the chain is Intravirion.

This sequence belongs to the chordopoxvirinae L1 protein family.

It localises to the virion membrane. This Capra hircus (Goat) protein is Protein F9 homolog.